The sequence spans 165 residues: Chorismate pyruvate-lyase (165 aa).

Substrate is bound by residues M35, R77, L115, and E156.

This sequence belongs to the UbiC family. As to quaternary structure, monomer.

Its subcellular location is the cytoplasm. The enzyme catalyses chorismate = 4-hydroxybenzoate + pyruvate. It participates in cofactor biosynthesis; ubiquinone biosynthesis. Removes the pyruvyl group from chorismate, with concomitant aromatization of the ring, to provide 4-hydroxybenzoate (4HB) for the ubiquinone pathway. The polypeptide is Chorismate pyruvate-lyase (Salmonella agona (strain SL483)).